The chain runs to 413 residues: E3 ubiquitin-protein ligase makorin (413 aa).

2 consecutive C3H1-type zinc fingers follow at residues 2 to 29 (PRHE…HDVA) and 30 to 57 (TRNE…HTRP). Residues 61-85 (ELPSCSTPQTSQNQQNLQNSGQRVR) are disordered. Low complexity predominate over residues 66-82 (STPQTSQNQQNLQNSGQ). The C3H1-type 3 zinc finger occupies 138–167 (QAQLMMCPYHQKSGDCNRQDMDCPFAHGNY). An RING-type zinc finger spans residues 213 to 267 (CGICMENIFEKNLRFGILNGCQHCFCLDCIRQWRSKDQENVELATKTVRSCPECR). Residues 296–327 (NTKRKICKYYSNERSRGACPFGNKCFYKHQLP) form a C3H1-type 4 zinc finger.

As to quaternary structure, component of a complex at least containing lep-2, lin-28 and the long non-coding RNA lep-5, which mediates the degradation of lin-28. As to expression, expressed in seam, tail tip, and other hypodermal cells, head and tail neurons, the pharynx, intestine and the developing hermaphrodite somatic gonad. Not expressed in body wall muscle cells.

It localises to the cytoplasm. It carries out the reaction S-ubiquitinyl-[E2 ubiquitin-conjugating enzyme]-L-cysteine + [acceptor protein]-L-lysine = [E2 ubiquitin-conjugating enzyme]-L-cysteine + N(6)-ubiquitinyl-[acceptor protein]-L-lysine.. It participates in protein modification; protein ubiquitination. In terms of biological role, E3 ubiquitin ligase which catalyzes the covalent attachment of ubiquitin moieties onto substrate proteins. Promotes the larval to adult transition by binding to the long non-coding RNA lep-5 to target the heterochronic protein lin-28 for degradation by the proteasome. This association and degradation of lin-28 also controls the timing of the sexual differentiation of individual neurons in males including the AIM, AWA, ADF, ASJ and CEM neurons. Plays a role in governing the developmental timing of male tail tip morphogenesis. Plays a role in two aspects of male mating behavior: response to hermaphrodite contact and vulva location. May play a role in the detection of preferred food sources. The chain is E3 ubiquitin-protein ligase makorin from Caenorhabditis elegans.